Reading from the N-terminus, the 658-residue chain is Translin-associated factor X-interacting protein 1 (658 aa).

Coiled coils occupy residues 144–184 and 230–295; these read EISL…AEEY and ALKM…LMQL.

As to quaternary structure, interacts with TSNAX.

Its subcellular location is the cytoplasm. It localises to the perinuclear region. Functionally, possible role in spermatogenesis. The chain is Translin-associated factor X-interacting protein 1 from Homo sapiens (Human).